Reading from the N-terminus, the 214-residue chain is 3-isopropylmalate dehydratase small subunit (214 aa).

It belongs to the LeuD family. LeuD type 1 subfamily. Heterodimer of LeuC and LeuD.

The catalysed reaction is (2R,3S)-3-isopropylmalate = (2S)-2-isopropylmalate. It participates in amino-acid biosynthesis; L-leucine biosynthesis; L-leucine from 3-methyl-2-oxobutanoate: step 2/4. Catalyzes the isomerization between 2-isopropylmalate and 3-isopropylmalate, via the formation of 2-isopropylmaleate. This is 3-isopropylmalate dehydratase small subunit from Pseudomonas putida (strain W619).